The primary structure comprises 129 residues: Glycine cleavage system H protein (129 aa).

In terms of domain architecture, Lipoyl-binding spans 24 to 106 (SYTVGITEHA…YGEGWFFRVM (83 aa)). An N6-lipoyllysine modification is found at K65.

It belongs to the GcvH family. In terms of assembly, the glycine cleavage system is composed of four proteins: P, T, L and H. (R)-lipoate is required as a cofactor.

Its function is as follows. The glycine cleavage system catalyzes the degradation of glycine. The H protein shuttles the methylamine group of glycine from the P protein to the T protein. This Shewanella baltica (strain OS155 / ATCC BAA-1091) protein is Glycine cleavage system H protein.